A 494-amino-acid polypeptide reads, in one-letter code: WD repeat-containing protein 37 (494 aa).

Residues 1–38 (MPTESGSWAAARQTKQKRKSHSLSIKRTNSSEQDRPGL) form a disordered region. Residues 22 to 31 (SLSIKRTNSS) are compositionally biased toward polar residues. 2 WD repeats span residues 154 to 194 (GHRD…CLIK) and 197 to 236 (GHAGSVNSIKFHPTEQIALTASGDQTAHIWRYMVQLPTPQ). Residues 236-266 (QPTADTSISGEEEVDFSDKDENDGDGDASSD) form a disordered region. Acidic residues predominate over residues 245 to 263 (GEEEVDFSDKDENDGDGDA). WD repeat units follow at residues 279-318 (SHQGVVIAADWLVGGKQAVTASWDRTANLYDVETSELVHS), 321-360 (GHDQELTHCCTHPTQRLVVTSSRDTTFRLWDFRDPSIHSV), 365-403 (GHTDTVTSAVFTVGDNVVSGSDDRTVKVWDLKNMRSPIA), 406-445 (RTDSAINRISVSVGQRIIALPHDNRQVRLFDMSGVRLARL), and 452-493 (GHRR…LLQE).

Its subcellular location is the cytoplasm. It is found in the nucleus. The polypeptide is WD repeat-containing protein 37 (wdr37) (Xenopus tropicalis (Western clawed frog)).